The chain runs to 248 residues: MNVVVDTHTHTLASGHAYSTIIENARSAQNKGLKLLCTTDHAPEMPGAPHYWYFNNQRILPRFLHQVGILRGVEANILNVKGEIDLPSSSDQHLDWVIASFHEPVFAPASEAEHTAALLNVIKSGRIDVLGHSGNPNYPFDIERVLQCAKEHNVAIEVNNTSLTGKSRKGSDVRCDKIVEIGKEVGVYFTTGSDAHFCEEIARLELAIALLEKYEISEDKIITTSTSRFLNFLLLRGKPIIPEFDSLY.

9 residues coordinate Zn(2+): histidine 8, histidine 10, histidine 16, histidine 41, glutamate 74, histidine 102, histidine 132, aspartate 194, and histidine 196.

This sequence belongs to the PHP family. Requires Zn(2+) as cofactor.

This Aliivibrio fischeri (strain ATCC 700601 / ES114) (Vibrio fischeri) protein is Probable phosphatase VF_A0065.